We begin with the raw amino-acid sequence, 323 residues long: Methionyl-tRNA formyltransferase (323 aa).

Position 113–116 (113–116) interacts with (6S)-5,6,7,8-tetrahydrofolate; that stretch reads SLLP.

This sequence belongs to the Fmt family.

It carries out the reaction L-methionyl-tRNA(fMet) + (6R)-10-formyltetrahydrofolate = N-formyl-L-methionyl-tRNA(fMet) + (6S)-5,6,7,8-tetrahydrofolate + H(+). Functionally, attaches a formyl group to the free amino group of methionyl-tRNA(fMet). The formyl group appears to play a dual role in the initiator identity of N-formylmethionyl-tRNA by promoting its recognition by IF2 and preventing the misappropriation of this tRNA by the elongation apparatus. This is Methionyl-tRNA formyltransferase from Nitrosococcus oceani (strain ATCC 19707 / BCRC 17464 / JCM 30415 / NCIMB 11848 / C-107).